The following is a 555-amino-acid chain: Beta-caryophyllene synthase (555 aa).

D313, D317, D456, and E464 together coordinate Mg(2+). The DDXXD motif signature appears at 313-317 (DDIYD).

The protein belongs to the terpene synthase family. Requires Mg(2+) as cofactor.

It carries out the reaction (2E,6E)-farnesyl diphosphate = (+)-(E)-beta-caryophyllene + diphosphate. It functions in the pathway secondary metabolite biosynthesis; terpenoid biosynthesis. Functionally, sesquiterpene synthase converting farnesyl diphosphate to beta-caryophyllene as the major product. This is Beta-caryophyllene synthase from Phyla dulcis (Aztec sweet herb).